The chain runs to 299 residues: Very long chain fatty acid elongase 5 (299 aa).

Met1 carries the N-acetylmethionine modification. 6 consecutive transmembrane segments (helical) span residues 26–46 (WFLL…LLIV), 64–84 (ILVV…CELV), 112–132 (VLRW…FFIL), 150–170 (MLNI…YFGA), 205–225 (GQLL…IWPC), and 226–246 (TFPL…IALF). The disordered stretch occupies residues 275–299 (AAVNGHTNSFSPLENNVKPRKLRKD). Over residues 279–288 (GHTNSFSPLE) the composition is skewed to polar residues. Residue Ser285 is modified to Phosphoserine.

The protein belongs to the ELO family. ELOVL5 subfamily. Interacts with TECR.

The protein localises to the endoplasmic reticulum membrane. It is found in the cell projection. It localises to the dendrite. It carries out the reaction a very-long-chain acyl-CoA + malonyl-CoA + H(+) = a very-long-chain 3-oxoacyl-CoA + CO2 + CoA. It catalyses the reaction (6Z,9Z,12Z)-octadecatrienoyl-CoA + malonyl-CoA + H(+) = (8Z,11Z,14Z)-3-oxoeicosatrienoyl-CoA + CO2 + CoA. The enzyme catalyses (9Z,12Z,15Z)-octadecatrienoyl-CoA + malonyl-CoA + H(+) = (11Z,14Z,17Z)-3-oxoeicosatrienoyl-CoA + CO2 + CoA. The catalysed reaction is (9Z)-hexadecenoyl-CoA + malonyl-CoA + H(+) = 3-oxo-(11Z)-octadecenoyl-CoA + CO2 + CoA. It carries out the reaction (9Z)-octadecenoyl-CoA + malonyl-CoA + H(+) = 3-oxo-(11Z)-eicosenoyl-CoA + CO2 + CoA. It catalyses the reaction (11Z)-octadecenoyl-CoA + malonyl-CoA + H(+) = 3-oxo-(13Z)-eicosenoyl-CoA + CO2 + CoA. The enzyme catalyses (9Z,12Z)-octadecadienoyl-CoA + malonyl-CoA + H(+) = (11Z,14Z)-3-oxoicosa-11,14-dienoyl-CoA + CO2 + CoA. The catalysed reaction is (6Z,9Z,12Z,15Z)-octadecatetraenoyl-CoA + malonyl-CoA + H(+) = (8Z,11Z,14Z,17Z)-3-oxoicosatetraenoyl-CoA + CO2 + CoA. It carries out the reaction (5Z,8Z,11Z,14Z)-eicosatetraenoyl-CoA + malonyl-CoA + H(+) = (7Z,10Z,13Z,16Z)-3-oxodocosatetraenoyl-CoA + CO2 + CoA. It catalyses the reaction (5Z,8Z,11Z,14Z,17Z)-eicosapentaenoyl-CoA + malonyl-CoA + H(+) = 3-oxo-(7Z,10Z,13Z,16Z,19Z)-docosapentaenoyl-CoA + CO2 + CoA. It participates in lipid metabolism; polyunsaturated fatty acid biosynthesis. Its function is as follows. Catalyzes the first and rate-limiting reaction of the four reactions that constitute the long-chain fatty acids elongation cycle. This endoplasmic reticulum-bound enzymatic process allows the addition of 2 carbons to the chain of long- and very long-chain fatty acids (VLCFAs) per cycle. Condensing enzyme that acts specifically toward polyunsaturated acyl-CoA with the higher activity toward C18:3(n-6) acyl-CoA. May participate in the production of monounsaturated and of polyunsaturated VLCFAs of different chain lengths that are involved in multiple biological processes as precursors of membrane lipids and lipid mediators. In conditions where the essential linoleic and alpha linoleic fatty acids are lacking it is also involved in the synthesis of Mead acid from oleic acid. The protein is Very long chain fatty acid elongase 5 of Macaca fascicularis (Crab-eating macaque).